The chain runs to 555 residues: CTP synthase (555 aa).

Residues 1–271 form an amidoligase domain region; sequence MVKRGKKTKY…DDKLAELFNI (271 aa). Serine 19 contacts CTP. Residue serine 19 participates in UTP binding. Residues 20–25 and aspartate 77 each bind ATP; that span reads SLGKGL. Mg(2+) is bound by residues aspartate 77 and glutamate 145. CTP contacts are provided by residues 152-154, 192-197, and lysine 228; these read DIE and KTKPTQ. UTP-binding positions include 192-197 and lysine 228; that span reads KTKPTQ. The Glutamine amidotransferase type-1 domain maps to 297 to 537; it reads RIGIVGKYVE…VKAALEHRDA (241 aa). Glycine 358 contacts L-glutamine. Residue cysteine 385 is the Nucleophile; for glutamine hydrolysis of the active site. Residues 386 to 389, glutamate 409, and arginine 466 each bind L-glutamine; that span reads LGLQ. Catalysis depends on residues histidine 510 and glutamate 512. Residues 535–555 form a disordered region; that stretch reads RDAQQRQPPAEVKKLAVGKNG.

Belongs to the CTP synthase family. In terms of assembly, homotetramer.

It catalyses the reaction UTP + L-glutamine + ATP + H2O = CTP + L-glutamate + ADP + phosphate + 2 H(+). The enzyme catalyses L-glutamine + H2O = L-glutamate + NH4(+). The catalysed reaction is UTP + NH4(+) + ATP = CTP + ADP + phosphate + 2 H(+). It participates in pyrimidine metabolism; CTP biosynthesis via de novo pathway; CTP from UDP: step 2/2. With respect to regulation, allosterically activated by GTP, when glutamine is the substrate; GTP has no effect on the reaction when ammonia is the substrate. The allosteric effector GTP functions by stabilizing the protein conformation that binds the tetrahedral intermediate(s) formed during glutamine hydrolysis. Inhibited by the product CTP, via allosteric rather than competitive inhibition. Catalyzes the ATP-dependent amination of UTP to CTP with either L-glutamine or ammonia as the source of nitrogen. Regulates intracellular CTP levels through interactions with the four ribonucleotide triphosphates. The protein is CTP synthase of Anaeromyxobacter sp. (strain K).